Here is a 202-residue protein sequence, read N- to C-terminus: Small ribosomal subunit protein uS3 (202 aa).

One can recognise a KH type-2 domain in the interval 18–87 (LNEYLQRQLV…NPQIDVVEVP (70 aa)).

Belongs to the universal ribosomal protein uS3 family. In terms of assembly, part of the 30S ribosomal subunit.

Its function is as follows. Binds the lower part of the 30S subunit head. The sequence is that of Small ribosomal subunit protein uS3 from Thermofilum pendens (strain DSM 2475 / Hrk 5).